A 1081-amino-acid chain; its full sequence is Inversin (1081 aa).

ANK repeat units follow at residues 13–42 (SLASQVHAAAINGDKGALHRLIIGNSALKD), 47–76 (FGRTPLMYCVLADRLDCADALLKAGADVNK), 80–110 (SQRTALHLAAQKGNYRFMKLLLTRRANWMQK), 113–144 (EEMTPLHLATRHKSPKCLALLLKFMAPGEVDT), 148–177 (NKQTALHWSAYYNNPEHVKLLIKHDSNIGI), 181–213 (EGKIPLHWAANHKDPSAVHTVRCILDAAPTESL), 220–250 (EGRTPLHFAVADGNVTVVDVLTSYESCNITS), 254–283 (LFRTPLHWAALLGHAQIVHLLLERNKSGTI), 288–317 (QGATPLHYAAQSNFAETVKVFLKHPSVKDD), 321–350 (EGRTSFMWAAGKGSDDVLRTMLSLKSDIDI), 356–385 (YGGTALHAAALSGHVSTVKLLLENNAQVDA), 389–418 (MKHTPLFRACEMGHKDVIQTLIKGGARVDL), 422–451 (DGHSLLHWAALGGNADVCQILIENKINPNV), 455–484 (AGRTPLQCAAYGGYINCMAVLMENNADPNI), 488–517 (EGRTALHWSCNNGYLDAIKLLLDFAAFPNQ), and 523–553 (ERYTPLDYALLGERHEVIQFMLEHGALSIAA). Asn75 carries the post-translational modification 3-hydroxyasparagine. Positions 490–498 (RTALHWSCN) match the D-box 1 motif. The 30-residue stretch at 555–584 (QDIAAFKIQAVYKGYKVRKAFRDRKNLLMK) folds into the IQ 1 domain. The segment covering 589–610 (RKDAAAKKREEENKRREAEQQK) has biased composition (basic and acidic residues). The segment at 589 to 889 (RKDAAAKKRE…PAPGPLSGQS (301 aa)) is disordered. Residues 638-649 (RAPSKQPPSSEA) show a composition bias toward polar residues. Composition is skewed to basic and acidic residues over residues 688 to 698 (KPNESPREQCK), 724 to 740 (EKSRSETGGEQRCDKGK), and 772 to 785 (DGHRKPSRRQDTAS). Residues 863 to 872 (SGTSTLSEDA) show a composition bias toward polar residues. The D-box 2 motif lies at 910–918 (RKELFRKKN). The IQ 2 domain occupies 917 to 946 (KNKAAAVIQRAWRSYQLRKHLSHLLHMKEL). One copy of the ANK 17 repeat lies at 1022–1050 (RTHSVLHLNSVSNLQCIHLLENSGRSKNF). Residues 1051-1061 (SYNLQSATPPK) are compositionally biased toward polar residues. Positions 1051–1081 (SYNLQSATPPKTKTKLRPSLEEECVRGSWNS) are disordered.

Binds calmodulin via its IQ domains. Interacts with APC2. Interacts with alpha-, beta-, and gamma-catenin. Interacts with N-cadherin (CDH2). Interacts with NPHP1. Interacts with DVL1, PRICKLE (PRICKLE1 or PRICKLE2) and Strabismus (VANGL1 or VANGL2). Component of a complex containing at least ANKS6, INVS, NEK8 and NPHP3. ANKS6 may organize complex assembly by linking INVS and NPHP3 to NEK8 and INVS may target the complex to the proximal ciliary axoneme. Interacts with IQCB1; the interaction likely requires additional interactors. Interacts with microtubules. Post-translationally, may be ubiquitinated via its interaction with APC2. Hydroxylated at Asn-75, most probably by HIF1AN.

Its subcellular location is the cytoplasm. The protein localises to the cytoskeleton. The protein resides in the membrane. It is found in the spindle. It localises to the nucleus. Its function is as follows. Required for normal renal development and establishment of left-right axis. Probably acts as a molecular switch between different Wnt signaling pathways. Inhibits the canonical Wnt pathway by targeting cytoplasmic disheveled (DVL1) for degradation by the ubiquitin-proteasome. This suggests that it is required in renal development to oppose the repression of terminal differentiation of tubular epithelial cells by Wnt signaling. Involved in the organization of apical junctions in kidney cells together with NPHP1, NPHP4 and RPGRIP1L/NPHP8. Does not seem to be strictly required for ciliogenesis. In Canis lupus familiaris (Dog), this protein is Inversin (INVS).